A 354-amino-acid chain; its full sequence is MRFDLEPPSSVAAAHRTGVLLINLGTPDAPTPRAVRRYLAEFLSDPRVVEIPQVVWQVLLRTLILPLRGRASAKKYAAVWMPEGSPLRVYTERQTEGVRHLLASNAYQVTVDYAMRYGSPNIAQALAQFKRAGVERVLLMPMYPQYSASTTATAFDAAFAALARMRNQPEVRTVRQYADHPAYIHALAEQVRQYWAQHGRPDFAAGDKLVLSFHGVPKRTLDLGDPYHDQCQQTGALLMAALGLSTLECRVTFQSRFGKAEWLQPYTAPTLRELGAAGVRRADVFCPGFTADCLETIEEIGMEVRDEFIAGGGQAFHRIPCLNGAHAWIGALGEIVAENLQGWPVKAAQPDMVN.

Residues His214 and Glu295 each coordinate Fe cation.

This sequence belongs to the ferrochelatase family.

It localises to the cytoplasm. The enzyme catalyses heme b + 2 H(+) = protoporphyrin IX + Fe(2+). Its pathway is porphyrin-containing compound metabolism; protoheme biosynthesis; protoheme from protoporphyrin-IX: step 1/1. Functionally, catalyzes the ferrous insertion into protoporphyrin IX. The polypeptide is Ferrochelatase (Burkholderia ambifaria (strain ATCC BAA-244 / DSM 16087 / CCUG 44356 / LMG 19182 / AMMD) (Burkholderia cepacia (strain AMMD))).